Consider the following 534-residue polypeptide: Benzaldehyde dehydrogenase, mitochondrial (534 aa).

A mitochondrion-targeting transit peptide spans Met-1–Gly-29. NAD(+) contacts are provided by residues Ile-199–Asn-202, Lys-225–Glu-228, Gly-258–Pro-259, Gly-278–Ser-279, and Glu-301–Gly-303. Glu-301 (proton acceptor) is an active-site residue. Residue Cys-335 is the Nucleophile of the active site. Residues Asp-381–Lys-385 and Glu-432–Phe-434 each bind NAD(+).

Belongs to the aldehyde dehydrogenase family. As to quaternary structure, homotetramer. In terms of tissue distribution, expressed predominantly in the upper and lower flower petal lobes, and, at low levels, in flower tubes, pistils, stamens and sepals.

It localises to the mitochondrion. It carries out the reaction an aldehyde + NAD(+) + H2O = a carboxylate + NADH + 2 H(+). The catalysed reaction is acetaldehyde + NAD(+) + H2O = acetate + NADH + 2 H(+). The enzyme catalyses benzaldehyde + NAD(+) + H2O = benzoate + NADH + 2 H(+). It catalyses the reaction 2-phenylacetaldehyde + NAD(+) + H2O = 2-phenylacetate + NADH + 2 H(+). The protein operates within aromatic compound metabolism. With respect to regulation, inhibited by disulfiram. In terms of biological role, component of the floral volatile benzenoid/phenylpropanoid (FVBP) biosynthetic pathway. Catalyzes the oxidation of benzaldehyde to benzoic acid (BA). Capable of oxidizing a broad spectrum of aliphatic aldehydes; increased carbon chain length results in a decrease in its efficiency. This chain is Benzaldehyde dehydrogenase, mitochondrial, found in Antirrhinum majus (Garden snapdragon).